A 519-amino-acid chain; its full sequence is Cytosol aminopeptidase (519 aa).

Position 45 is an N6-succinyllysine (lysine 45). Serine 54 carries the post-translational modification Phosphoserine. Lysine 61 and lysine 103 each carry N6-succinyllysine. Serine 180 and serine 194 each carry phosphoserine. Zn(2+)-binding residues include leucine 202 and methionine 203. Lysine 221 is subject to N6-acetyllysine; alternate. At lysine 221 the chain carries N6-succinyllysine; alternate. At serine 238 the chain carries Phosphoserine. The Zn(2+) site is built by lysine 282 and aspartate 287. The substrate site is built by lysine 282, aspartate 287, serine 292, and lysine 294. Aspartate 287 contributes to the Mg(2+) binding site. Residue lysine 294 is part of the active site. Zn(2+) is bound by residues arginine 303, aspartate 305, aspartate 364, and glutamate 366. The substrate site is built by aspartate 305 and aspartate 364. Residues aspartate 364 and glutamate 366 each contribute to the Mg(2+) site. Residue arginine 368 is part of the active site. Lysine 455 is subject to N6-acetyllysine; alternate. Residue lysine 455 is modified to N6-succinyllysine; alternate. An N6-succinyllysine modification is found at lysine 476. Lysine 489 is modified (N6-acetyllysine; alternate). Lysine 489 is subject to N6-succinyllysine; alternate.

Belongs to the peptidase M17 family. As to quaternary structure, homohexamer. It depends on Zn(2+) as a cofactor. Requires Mn(2+) as cofactor.

It is found in the cytoplasm. The enzyme catalyses Release of an N-terminal amino acid, Xaa-|-Yaa-, in which Xaa is preferably Leu, but may be other amino acids including Pro although not Arg or Lys, and Yaa may be Pro. Amino acid amides and methyl esters are also readily hydrolyzed, but rates on arylamides are exceedingly low.. It catalyses the reaction an S-substituted L-cysteinylglycine + H2O = an S-substituted L-cysteine + glycine. The catalysed reaction is L-cysteinylglycine + H2O = L-cysteine + glycine. It carries out the reaction S-benzyl-L-cysteinylglycine + H2O = S-benzyl-L-cysteine + glycine. The enzyme catalyses Release of N-terminal proline from a peptide.. Cytosolic metallopeptidase that catalyzes the removal of unsubstituted N-terminal hydrophobic amino acids from various peptides. The presence of Zn(2+) ions is essential for the peptidase activity, and the association with other cofactors can modulate the substrate spectificity of the enzyme. For instance, in the presence of Mn(2+), it displays a specific Cys-Gly hydrolyzing activity of Cys-Gly-S-conjugates. Involved in the metabolism of glutathione and in the degradation of glutathione S-conjugates, which may play a role in the control of the cell redox status. This chain is Cytosol aminopeptidase, found in Mus musculus (Mouse).